Here is a 383-residue protein sequence, read N- to C-terminus: Pantothenate kinase 1 (383 aa).

Belongs to the type II pantothenate kinase family. As to expression, highly expressed in leaves and developing seeds. Expressed in roots, stems and flowers.

It catalyses the reaction (R)-pantothenate + ATP = (R)-4'-phosphopantothenate + ADP + H(+). Its pathway is cofactor biosynthesis; coenzyme A biosynthesis; CoA from (R)-pantothenate: step 1/5. With respect to regulation, regulated by feedback inhibition by malonyl-CoA. Its function is as follows. Catalyzes the phosphorylation of pantothenate the first step in CoA biosynthesis. May play a role in the physiological regulation of the intracellular CoA concentration. Functionally redudant with PANK2. This Arabidopsis thaliana (Mouse-ear cress) protein is Pantothenate kinase 1 (PANK1).